The following is a 389-amino-acid chain: Glycerol-3-phosphate dehydrogenase [NAD(+)] 2 (389 aa).

Residues 40–45 (GSGNWG), F128, K151, and A184 each bind NAD(+). K151 serves as a coordination point for substrate. The active-site Proton acceptor is K244. The NAD(+) site is built by R309 and Q338. 309–310 (RN) contributes to the substrate binding site.

Belongs to the NAD-dependent glycerol-3-phosphate dehydrogenase family.

Its subcellular location is the cytoplasm. The catalysed reaction is sn-glycerol 3-phosphate + NAD(+) = dihydroxyacetone phosphate + NADH + H(+). This chain is Glycerol-3-phosphate dehydrogenase [NAD(+)] 2 (GPD2), found in Zygosaccharomyces rouxii.